The sequence spans 218 residues: uncharacterized protein (218 aa).

A run of 4 helical transmembrane segments spans residues 10–30 (IPPL…SLGI), 55–75 (IGVG…GYSI), 147–167 (VTGG…AGMA), and 175–195 (FSWI…ILLR).

This sequence belongs to the DedA family.

Its subcellular location is the cell membrane. This is an uncharacterized protein from Mycobacterium tuberculosis (strain CDC 1551 / Oshkosh).